Here is a 185-residue protein sequence, read N- to C-terminus: Ribosome-recycling factor (185 aa).

Belongs to the RRF family.

It localises to the cytoplasm. Responsible for the release of ribosomes from messenger RNA at the termination of protein biosynthesis. May increase the efficiency of translation by recycling ribosomes from one round of translation to another. The polypeptide is Ribosome-recycling factor (Actinobacillus pleuropneumoniae serotype 5b (strain L20)).